A 192-amino-acid chain; its full sequence is A-type ATP synthase subunit E (192 aa).

Belongs to the V-ATPase E subunit family. Has multiple subunits with at least A(3), B(3), C, D, E, F, H, I and proteolipid K(x).

The protein resides in the cell membrane. Component of the A-type ATP synthase that produces ATP from ADP in the presence of a proton gradient across the membrane. This is A-type ATP synthase subunit E from Halorubrum lacusprofundi (strain ATCC 49239 / DSM 5036 / JCM 8891 / ACAM 34).